A 257-amino-acid chain; its full sequence is NAD-capped RNA hydrolase NudC (257 aa).

Arg-69 serves as a coordination point for substrate. Cys-98 and Cys-101 together coordinate Zn(2+). Glu-111 lines the substrate pocket. Zn(2+) contacts are provided by Cys-116 and Cys-119. Tyr-124 is a substrate binding site. The Nudix hydrolase domain occupies 125–248 (PQIAPCIIVA…TVARRLIEDT (124 aa)). Residues Ala-158, Glu-174, and Glu-178 each coordinate a divalent metal cation. Positions 159–180 (GFVEVGETLEQAVAREVMEESG) match the Nudix box motif. 192–199 (QPWPFPQS) contacts substrate. Glu-219 is an a divalent metal cation binding site. Residue Ala-241 coordinates substrate.

The protein belongs to the Nudix hydrolase family. NudC subfamily. Homodimer. It depends on Mg(2+) as a cofactor. Requires Mn(2+) as cofactor. Zn(2+) is required as a cofactor.

The catalysed reaction is a 5'-end NAD(+)-phospho-ribonucleoside in mRNA + H2O = a 5'-end phospho-adenosine-phospho-ribonucleoside in mRNA + beta-nicotinamide D-ribonucleotide + 2 H(+). It carries out the reaction NAD(+) + H2O = beta-nicotinamide D-ribonucleotide + AMP + 2 H(+). The enzyme catalyses NADH + H2O = reduced beta-nicotinamide D-ribonucleotide + AMP + 2 H(+). Functionally, mRNA decapping enzyme that specifically removes the nicotinamide adenine dinucleotide (NAD) cap from a subset of mRNAs by hydrolyzing the diphosphate linkage to produce nicotinamide mononucleotide (NMN) and 5' monophosphate mRNA. The NAD-cap is present at the 5'-end of some mRNAs and stabilizes RNA against 5'-processing. Has preference for mRNAs with a 5'-end purine. Catalyzes the hydrolysis of a broad range of dinucleotide pyrophosphates. The chain is NAD-capped RNA hydrolase NudC from Salmonella schwarzengrund (strain CVM19633).